A 614-amino-acid chain; its full sequence is Probable NOT transcription complex subunit VIP2 (614 aa).

3 disordered regions span residues Met1–Gly46, Asn58–Arg89, and Asn361–Pro391. Polar residues predominate over residues Ala364–Thr381.

The protein belongs to the CNOT2/3/5 family. Interacts with Agrobacterium tumefaciens VirE2. Binds to VIP1. Forms a complex made of Agrobacterium VirE2, VIP1, VIP2 and single-stranded DNA (ssDNA).

The protein resides in the nucleus. Transcriptional regulator required for Agrobacterium-mediated stable genetic transformation by T-DNA integration in host genome, but not for T-DNA transient expression. The protein is Probable NOT transcription complex subunit VIP2 (VIP2) of Arabidopsis thaliana (Mouse-ear cress).